A 146-amino-acid chain; its full sequence is Anti-sigma F factor (146 aa).

The protein belongs to the anti-sigma-factor family.

It catalyses the reaction L-seryl-[protein] + ATP = O-phospho-L-seryl-[protein] + ADP + H(+). The enzyme catalyses L-threonyl-[protein] + ATP = O-phospho-L-threonyl-[protein] + ADP + H(+). Its function is as follows. Binds to sigma F and blocks its ability to form an RNA polymerase holoenzyme (E-sigma F). Phosphorylates SpoIIAA on a serine residue. This phosphorylation may enable SpoIIAA to act as an anti-anti-sigma factor that counteracts SpoIIAB and thus releases sigma F from inhibition. In Bacillus anthracis (strain A0248), this protein is Anti-sigma F factor.